Reading from the N-terminus, the 95-residue chain is MAFKPLHDRVLVKRVQSEEKTKGGLIIPDTAKEKPAEGEVVAVGAGARKDSGELIAPAVAVGDRILFGKWSGTEVTLDGVEMLIMKESDIMGIIS.

This sequence belongs to the GroES chaperonin family. Heptamer of 7 subunits arranged in a ring. Interacts with the chaperonin GroEL.

The protein resides in the cytoplasm. In terms of biological role, together with the chaperonin GroEL, plays an essential role in assisting protein folding. The GroEL-GroES system forms a nano-cage that allows encapsulation of the non-native substrate proteins and provides a physical environment optimized to promote and accelerate protein folding. GroES binds to the apical surface of the GroEL ring, thereby capping the opening of the GroEL channel. This chain is Co-chaperonin GroES, found in Rhodobacter capsulatus (Rhodopseudomonas capsulata).